The sequence spans 706 residues: MLVCYSVLACESLWDLPCSIMGSPLGHFTWDKYLKETCSVPAPVHCFKQSYTPPSNEFKISMKLEAQDPRNTTSTCIATVVGLTGARLRLRLDGSDNKNDFWRLVDSSEIQPIGNCEKNGGMLQPPLGFRLNASSWPMFLLKTLNGAEMAPIKIFHKEPPSPSHNFFKMGMKLEAVDRKNPHFICPATIGEVRGAEVLVTFDGWRGAFDYWCRFDSRDIFPVGWCSLTGDNLQPPGTKVVIPKNPSPSSDVSTEKPSIHSTKTVLEHQPGQRGRKPGKKRGRTPKILIPHPTSTPSKSAEPLKFPKKRGPKPGSKRKPRTLLSPPPTSPTTSTPEPDTSTVPQDAATVPSSAMQAPTVCIYLNKSGSTGPHLDKKKIQQLPDHFGPARASVVLQQAVQACIDCAYHQKTVFSFLKQGHGGEVISAVFDREQHTLNLPAVNSITYVLRFLEKLCHNLRSDNLFGNQPFTQTHLSLTATEYNHNHDRYLPGETFVLGNSLARSLETHSDLMDSALKPANLVSTSQNLRTPGYRPLLPSCGLPLSTVSAVRRLCSKGVLKGKKERRDVESFWKLNHSPGSDRHLESRDPPRLSGRDPSSWTVEDVMQFVREADPQLGSHADLFRKHEIDGKALLLLRSDMMMKYMGLKLGPALKLSFHIDRLKQVFWKRETILWSREGLSREVWPISEDTALGHFFSGMDKVFGSLSKR.

MBT repeat units lie at residues 28–126 (FTWD…LQPP) and 134–235 (SSWP…LQPP). Disordered stretches follow at residues 233–350 (QPPG…TVPS) and 576–595 (GSDR…RDPS). Composition is skewed to basic residues over residues 272-283 (RGRKPGKKRGRT) and 304-319 (FPKK…RKPR). Low complexity predominate over residues 329–340 (PTTSTPEPDTST). The segment covering 576–591 (GSDRHLESRDPPRLSG) has biased composition (basic and acidic residues). Residues 597–662 (WTVEDVMQFV…SFHIDRLKQV (66 aa)) form the SAM domain.

It belongs to the SCM family. In terms of assembly, associates with a PRC1-like complex. Interacts with the SAM domain of PHC1 via its SAM domain in vitro. Most abundant in testis. Moderate levels detected in heart, brain, lung, liver, skeletal muscle and kidney and lower levels in spleen.

It localises to the nucleus. Functionally, associates with Polycomb group (PcG) multiprotein complexes; the complex class is required to maintain the transcriptionally repressive state of some genes. The chain is Polycomb protein SCMH1 from Mus musculus (Mouse).